The chain runs to 75 residues: UPF0352 protein YejL (75 aa).

The protein belongs to the UPF0352 family.

This chain is UPF0352 protein YejL, found in Escherichia coli O139:H28 (strain E24377A / ETEC).